The sequence spans 728 residues: Polyribonucleotide nucleotidyltransferase (728 aa).

Positions 487 and 493 each coordinate Mg(2+). The region spanning proline 554–isoleucine 613 is the KH domain. Residues glycine 623–lysine 691 enclose the S1 motif domain. Acidic residues predominate over residues threonine 697–proline 707. The interval threonine 697–aspartate 728 is disordered. Positions glutamate 709 to glycine 718 are enriched in basic and acidic residues.

It belongs to the polyribonucleotide nucleotidyltransferase family. Mg(2+) is required as a cofactor.

The protein localises to the cytoplasm. The enzyme catalyses RNA(n+1) + phosphate = RNA(n) + a ribonucleoside 5'-diphosphate. Involved in mRNA degradation. Catalyzes the phosphorolysis of single-stranded polyribonucleotides processively in the 3'- to 5'-direction. This is Polyribonucleotide nucleotidyltransferase from Parvibaculum lavamentivorans (strain DS-1 / DSM 13023 / NCIMB 13966).